Reading from the N-terminus, the 114-residue chain is UPF0339 protein PM0519 (114 aa).

2 consecutive repeat copies span residues 11 to 59 (AKDG…NFEV) and 62 to 110 (AKND…IKDL).

It belongs to the UPF0339 family. Duplicated subfamily.

This Pasteurella multocida (strain Pm70) protein is UPF0339 protein PM0519.